A 1888-amino-acid polypeptide reads, in one-letter code: Protein mms22 (1888 aa).

3 disordered regions span residues 12-34 (DSQD…RGNE), 151-258 (FSSD…ISSN), and 316-354 (RRKL…SRFD). 3 stretches are compositionally biased toward polar residues: residues 13-32 (SQDS…SQRG), 212-227 (SNLN…SSTI), and 338-348 (SDNSISTPTPT).

It belongs to the MMS22 family.

Its subcellular location is the nucleus. Involved in protection against replication-dependent DNA damage. May act by restoring active replication forks, repairing unusual DNA structures, and/or preventing aberrant DNA rearrangement at arrested replication forks. In Schizosaccharomyces pombe (strain 972 / ATCC 24843) (Fission yeast), this protein is Protein mms22 (mus7).